We begin with the raw amino-acid sequence, 309 residues long: Aspartate carbamoyltransferase catalytic subunit (309 aa).

Carbamoyl phosphate contacts are provided by arginine 57 and threonine 58. Residue lysine 86 participates in L-aspartate binding. Carbamoyl phosphate-binding residues include arginine 107, histidine 135, and glutamine 138. Positions 168 and 229 each coordinate L-aspartate. Residues leucine 269 and proline 270 each coordinate carbamoyl phosphate.

The protein belongs to the aspartate/ornithine carbamoyltransferase superfamily. ATCase family. Heterooligomer of catalytic and regulatory chains.

It carries out the reaction carbamoyl phosphate + L-aspartate = N-carbamoyl-L-aspartate + phosphate + H(+). The protein operates within pyrimidine metabolism; UMP biosynthesis via de novo pathway; (S)-dihydroorotate from bicarbonate: step 2/3. In terms of biological role, catalyzes the condensation of carbamoyl phosphate and aspartate to form carbamoyl aspartate and inorganic phosphate, the committed step in the de novo pyrimidine nucleotide biosynthesis pathway. This Methanopyrus kandleri (strain AV19 / DSM 6324 / JCM 9639 / NBRC 100938) protein is Aspartate carbamoyltransferase catalytic subunit.